A 258-amino-acid chain; its full sequence is Tropinone reductase-like 3 (258 aa).

19–43 (IVTASTQGIGFAIAYRLGLEGAAVV) lines the NAD(+) pocket. Ser-150 contacts substrate. Residue Tyr-163 is the Proton acceptor of the active site.

The protein belongs to the short-chain dehydrogenases/reductases (SDR) family.

Functionally, has no tropinone reductase activity. The sequence is that of Tropinone reductase-like 3 from Erythroxylum coca (Coca plant).